A 347-amino-acid polypeptide reads, in one-letter code: Quinolinate synthase (347 aa).

Iminosuccinate is bound by residues H47 and S68. C113 is a [4Fe-4S] cluster binding site. Iminosuccinate is bound by residues 139-141 and S156; that span reads YAN. C200 serves as a coordination point for [4Fe-4S] cluster. Iminosuccinate is bound by residues 226-228 and T243; that span reads HPE. C297 provides a ligand contact to [4Fe-4S] cluster.

Belongs to the quinolinate synthase family. Type 1 subfamily. Requires [4Fe-4S] cluster as cofactor.

Its subcellular location is the cytoplasm. It carries out the reaction iminosuccinate + dihydroxyacetone phosphate = quinolinate + phosphate + 2 H2O + H(+). It participates in cofactor biosynthesis; NAD(+) biosynthesis; quinolinate from iminoaspartate: step 1/1. Functionally, catalyzes the condensation of iminoaspartate with dihydroxyacetone phosphate to form quinolinate. In Salmonella agona (strain SL483), this protein is Quinolinate synthase.